A 545-amino-acid polypeptide reads, in one-letter code: ATP synthase subunit alpha (545 aa).

Residue 173-180 participates in ATP binding; that stretch reads GDRQTGKT.

It belongs to the ATPase alpha/beta chains family. In terms of assembly, F-type ATPases have 2 components, CF(1) - the catalytic core - and CF(0) - the membrane proton channel. CF(1) has five subunits: alpha(3), beta(3), gamma(1), delta(1), epsilon(1). CF(0) has three main subunits: a(1), b(2) and c(9-12). The alpha and beta chains form an alternating ring which encloses part of the gamma chain. CF(1) is attached to CF(0) by a central stalk formed by the gamma and epsilon chains, while a peripheral stalk is formed by the delta and b chains.

Its subcellular location is the cell membrane. The enzyme catalyses ATP + H2O + 4 H(+)(in) = ADP + phosphate + 5 H(+)(out). Produces ATP from ADP in the presence of a proton gradient across the membrane. The alpha chain is a regulatory subunit. This chain is ATP synthase subunit alpha, found in Clavibacter sepedonicus (Clavibacter michiganensis subsp. sepedonicus).